The sequence spans 308 residues: Phosphoribosylaminoimidazole-succinocarboxamide synthase (308 aa).

The protein belongs to the SAICAR synthetase family.

The catalysed reaction is 5-amino-1-(5-phospho-D-ribosyl)imidazole-4-carboxylate + L-aspartate + ATP = (2S)-2-[5-amino-1-(5-phospho-beta-D-ribosyl)imidazole-4-carboxamido]succinate + ADP + phosphate + 2 H(+). It participates in purine metabolism; IMP biosynthesis via de novo pathway; 5-amino-1-(5-phospho-D-ribosyl)imidazole-4-carboxamide from 5-amino-1-(5-phospho-D-ribosyl)imidazole-4-carboxylate: step 1/2. The chain is Phosphoribosylaminoimidazole-succinocarboxamide synthase from Xylella fastidiosa (strain 9a5c).